Here is a 77-residue protein sequence, read N- to C-terminus: Acyl carrier protein (77 aa).

In terms of domain architecture, Carrier spans 2–77 (SDIADRVKKI…DAVKFISEAA (76 aa)). Position 37 is an O-(pantetheine 4'-phosphoryl)serine (S37).

The protein belongs to the acyl carrier protein (ACP) family. Post-translationally, 4'-phosphopantetheine is transferred from CoA to a specific serine of apo-ACP by AcpS. This modification is essential for activity because fatty acids are bound in thioester linkage to the sulfhydryl of the prosthetic group.

The protein resides in the cytoplasm. Its pathway is lipid metabolism; fatty acid biosynthesis. Its function is as follows. Carrier of the growing fatty acid chain in fatty acid biosynthesis. This is Acyl carrier protein from Cereibacter sphaeroides (strain ATCC 17029 / ATH 2.4.9) (Rhodobacter sphaeroides).